A 392-amino-acid chain; its full sequence is 8-amino-7-oxononanoate synthase (392 aa).

Substrate is bound at residue R18. Pyridoxal 5'-phosphate is bound at residue 105 to 106 (GY). H130 is a binding site for substrate. Positions 177, 205, and 234 each coordinate pyridoxal 5'-phosphate. Position 237 is an N6-(pyridoxal phosphate)lysine (K237). T351 lines the substrate pocket.

This sequence belongs to the class-II pyridoxal-phosphate-dependent aminotransferase family. BioF subfamily. In terms of assembly, homodimer. Pyridoxal 5'-phosphate serves as cofactor.

The catalysed reaction is 6-carboxyhexanoyl-[ACP] + L-alanine + H(+) = (8S)-8-amino-7-oxononanoate + holo-[ACP] + CO2. It functions in the pathway cofactor biosynthesis; biotin biosynthesis. In terms of biological role, catalyzes the decarboxylative condensation of pimeloyl-[acyl-carrier protein] and L-alanine to produce 8-amino-7-oxononanoate (AON), [acyl-carrier protein], and carbon dioxide. This chain is 8-amino-7-oxononanoate synthase, found in Thioalkalivibrio sulfidiphilus (strain HL-EbGR7).